Consider the following 2312-residue polypeptide: Protein Ycf2 (2312 aa).

An ATP-binding site is contributed by Gly1630–Ser1637.

It belongs to the Ycf2 family.

It localises to the plastid. Its subcellular location is the chloroplast stroma. Its function is as follows. Probable ATPase of unknown function. Its presence in a non-photosynthetic plant (Epifagus virginiana) and experiments in tobacco indicate that it has an essential function which is probably not related to photosynthesis. This Manihot esculenta (Cassava) protein is Protein Ycf2.